We begin with the raw amino-acid sequence, 198 residues long: Peroxiredoxin-2 (198 aa).

A2 bears the N-acetylalanine mark. The 159-residue stretch at 6-164 (AHIGKPAPDF…ALRLVQAFQY (159 aa)) folds into the Thioredoxin domain. C51 acts as the Cysteine sulfenic acid (-SOH) intermediate in catalysis. A Phosphoserine modification is found at S112. At T182 the chain carries Phosphothreonine. Position 196 is an N6-acetyllysine (K196).

Belongs to the peroxiredoxin family. AhpC/Prx1 subfamily. Homodimer; disulfide-linked, upon oxidation. 5 homodimers assemble to form a ring-like decamer. Interacts with TIPIN. The enzyme can be inactivated by further oxidation of the cysteine sulfenic acid (C(P)-SOH) to sulphinic acid (C(P)-SO2H) instead of its condensation to a disulfide bond. It can be reactivated by forming a transient disulfide bond with sulfiredoxin SRXN1, which reduces the cysteine sulfinic acid in an ATP- and Mg-dependent manner. In terms of processing, acetylation increases resistance to transition to high molecular-mass complexes. Deacetylated by HDAC6 which decreases reducing activity.

The protein resides in the cytoplasm. The enzyme catalyses a hydroperoxide + [thioredoxin]-dithiol = an alcohol + [thioredoxin]-disulfide + H2O. In terms of biological role, thiol-specific peroxidase that catalyzes the reduction of hydrogen peroxide and organic hydroperoxides to water and alcohols, respectively. Plays a role in cell protection against oxidative stress by detoxifying peroxides and as sensor of hydrogen peroxide-mediated signaling events. Might participate in the signaling cascades of growth factors and tumor necrosis factor-alpha by regulating the intracellular concentrations of H(2)O(2). The chain is Peroxiredoxin-2 (Prdx2) from Rattus norvegicus (Rat).